An 88-amino-acid polypeptide reads, in one-letter code: uncharacterized protein (88 aa).

This is an uncharacterized protein from Banana bunchy top virus (isolate Autralia) (BBTV).